We begin with the raw amino-acid sequence, 354 residues long: tRNA pseudouridine synthase D (354 aa).

Aspartate 86 serves as the catalytic Nucleophile. Residues 162-309 (GVPNYFGPQR…LEVGRRALRL (148 aa)) enclose the TRUD domain.

It belongs to the pseudouridine synthase TruD family.

The catalysed reaction is uridine(13) in tRNA = pseudouridine(13) in tRNA. Responsible for synthesis of pseudouridine from uracil-13 in transfer RNAs. The polypeptide is tRNA pseudouridine synthase D (Methylococcus capsulatus (strain ATCC 33009 / NCIMB 11132 / Bath)).